The chain runs to 294 residues: tRNA dimethylallyltransferase (294 aa).

10–17 serves as a coordination point for ATP; that stretch reads GITASGKS. 12 to 17 provides a ligand contact to substrate; the sequence is TASGKS. Residues 36 to 39 form an interaction with substrate tRNA region; it reads DSKQ.

This sequence belongs to the IPP transferase family. As to quaternary structure, monomer. The cofactor is Mg(2+).

It catalyses the reaction adenosine(37) in tRNA + dimethylallyl diphosphate = N(6)-dimethylallyladenosine(37) in tRNA + diphosphate. Its function is as follows. Catalyzes the transfer of a dimethylallyl group onto the adenine at position 37 in tRNAs that read codons beginning with uridine, leading to the formation of N6-(dimethylallyl)adenosine (i(6)A). This chain is tRNA dimethylallyltransferase, found in Wolbachia sp. subsp. Drosophila simulans (strain wRi).